The sequence spans 644 residues: 3-isopropylmalate dehydratase (644 aa).

Residues Cys-400, Cys-460, and Cys-463 each contribute to the [4Fe-4S] cluster site. A disordered region spans residues 521–568 (SEIPGTPKQSPRQEVVAEFESEEDDVDSSSVDSAPVATPPSTGDSAGM). Positions 537–547 (AEFESEEDDVD) are enriched in acidic residues.

The protein belongs to the aconitase/IPM isomerase family. In terms of assembly, monomer. It depends on [4Fe-4S] cluster as a cofactor.

It catalyses the reaction (2R,3S)-3-isopropylmalate = (2S)-2-isopropylmalate. Its pathway is amino-acid biosynthesis; L-leucine biosynthesis; L-leucine from 3-methyl-2-oxobutanoate: step 2/4. Catalyzes the isomerization between 2-isopropylmalate and 3-isopropylmalate, via the formation of 2-isopropylmaleate. This Mucor circinelloides f. lusitanicus (Mucor racemosus var. lusitanicus) protein is 3-isopropylmalate dehydratase (LEUA).